Consider the following 378-residue polypeptide: 1-acyl-sn-glycerol-3-phosphate acyltransferase delta (378 aa).

The chain crosses the membrane as a helical span at residues 11–31 (FLCHLVFCYVFIASGLIINTI). The short motif at 96 to 101 (HKFEID) is the HXXXXD motif element. 3 helical membrane-spanning segments follow: residues 125–145 (ELAY…VFCS), 307–327 (TLVN…QFLV), and 338–358 (LASF…MIGV).

The protein belongs to the 1-acyl-sn-glycerol-3-phosphate acyltransferase family.

It is found in the endoplasmic reticulum membrane. It catalyses the reaction a 1-acyl-sn-glycero-3-phosphate + an acyl-CoA = a 1,2-diacyl-sn-glycero-3-phosphate + CoA. The catalysed reaction is (4Z,7Z,10Z,13Z,16Z,19Z)-docosahexaenoyl-CoA + 1-hexadecanoyl-sn-glycero-3-phosphate = 1-hexadecanoyl-2-(4Z,7Z,10Z,13Z,16Z,19Z-docosahexaenoyl)-sn-glycero-3-phosphate + CoA. The enzyme catalyses 1-octadecanoyl-sn-glycero-3-phosphate + (9Z,12Z)-octadecadienoyl-CoA = 1-octadecanoyl-2-(9Z,12Z-octadecadienoyl)-sn-glycero-3-phosphate + CoA. It carries out the reaction 1-octadecanoyl-sn-glycero-3-phosphate + (4Z,7Z,10Z,13Z,16Z,19Z)-docosahexaenoyl-CoA = 1-octadecanoyl-2-(4Z,7Z,10Z,13Z,16Z,19Z-docosahexaenoyl)-sn-glycero-3-phosphate + CoA. It catalyses the reaction (4Z,7Z,10Z,13Z,16Z,19Z)-docosahexaenoyl-CoA + 1-(9Z-octadecenoyl)-sn-glycero-3-phosphate = 1-(9Z-octadecenoyl)-2-(4Z,7Z,10Z,13Z,16Z,19Z-docosahexaenoyl)-sn-glycero-3-phosphate + CoA. The protein operates within phospholipid metabolism; CDP-diacylglycerol biosynthesis; CDP-diacylglycerol from sn-glycerol 3-phosphate: step 2/3. Its function is as follows. Converts 1-acyl-sn-glycerol-3-phosphate (lysophosphatidic acid or LPA) into 1,2-diacyl-sn-glycerol-3-phosphate (phosphatidic acid or PA) by incorporating an acyl moiety at the sn-2 position of the glycerol backbone. Exhibits high acyl-CoA specificity for polyunsaturated fatty acyl-CoA, especially docosahexaenoyl-CoA (22:6-CoA, DHA-CoA). The protein is 1-acyl-sn-glycerol-3-phosphate acyltransferase delta (AGPAT4) of Pongo abelii (Sumatran orangutan).